Here is a 545-residue protein sequence, read N- to C-terminus: Ribulokinase (545 aa).

This sequence belongs to the ribulokinase family.

The catalysed reaction is D-ribulose + ATP = D-ribulose 5-phosphate + ADP + H(+). It carries out the reaction L-ribulose + ATP = L-ribulose 5-phosphate + ADP + H(+). Its pathway is carbohydrate degradation; L-arabinose degradation via L-ribulose; D-xylulose 5-phosphate from L-arabinose (bacterial route): step 2/3. In Staphylococcus aureus (strain USA300), this protein is Ribulokinase.